A 103-amino-acid chain; its full sequence is Small ribosomal subunit protein uS10 (103 aa).

This sequence belongs to the universal ribosomal protein uS10 family. Part of the 30S ribosomal subunit.

Functionally, involved in the binding of tRNA to the ribosomes. This Campylobacter lari (strain RM2100 / D67 / ATCC BAA-1060) protein is Small ribosomal subunit protein uS10.